The sequence spans 339 residues: Phenylalanine--tRNA ligase alpha subunit (339 aa).

Position 247 (Glu-247) interacts with Mg(2+).

The protein belongs to the class-II aminoacyl-tRNA synthetase family. Phe-tRNA synthetase alpha subunit type 1 subfamily. Tetramer of two alpha and two beta subunits. Mg(2+) serves as cofactor.

The protein resides in the cytoplasm. It catalyses the reaction tRNA(Phe) + L-phenylalanine + ATP = L-phenylalanyl-tRNA(Phe) + AMP + diphosphate + H(+). This chain is Phenylalanine--tRNA ligase alpha subunit, found in Deinococcus deserti (strain DSM 17065 / CIP 109153 / LMG 22923 / VCD115).